Reading from the N-terminus, the 427-residue chain is Tumor necrosis factor receptor superfamily member 16 (427 aa).

An N-terminal signal peptide occupies residues 1–28; that stretch reads MGAGATGRAMDGPRLLLLLLLGVSLGGA. Topologically, residues 29–250 are extracellular; the sequence is KEACPTGLYT…PVVTRGTTDN (222 aa). TNFR-Cys repeat units follow at residues 31-64, 66-107, 108-146, and 148-188; these read ACPTGLYTHSGECCKACNLGEGVAQPCGANQTVC, PCLD…DAVC, RCAYGYYQDETTGRCEACRVCEAGSGLVFSCQDKQNTVC, and ECPD…DAEC. Cystine bridges form between C32–C43, C44–C57, C47–C64, C67–C83, C86–C99, C89–C107, C109–C122, C125–C138, C128–C146, C149–C164, C167–C180, and C170–C188. A glycan (N-linked (GlcNAc...) asparagine) is linked at N60. The disordered stretch occupies residues 194 to 219; that stretch reads RWITRSTPPEGSDSTAPSTQEPEAPP. Residues 197–214 are compositionally biased toward polar residues; the sequence is TRSTPPEGSDSTAPSTQE. The helical transmembrane segment at 251-272 threads the bilayer; that stretch reads LIPVYCSILAAVVVGLVAYIAF. Over 273–427 the chain is Cytoplasmic; sequence KRWNSCKQNK…CSESTATSPV (155 aa). Polar residues-rich tracts occupy residues 281–291 and 305–326; these read NKQGANSRPVN and SGISVDSQSLHDQQPHTQTASG. The disordered stretch occupies residues 281–338; it reads NKQGANSRPVNQTPPPEGEKLHSDSGISVDSQSLHDQQPHTQTASGQALKGDGGLYSS. At S311 the chain carries Phosphoserine. Positions 326 to 341 are mediates interaction with KIDINS220; sequence GQALKGDGGLYSSLPP. Residues 344 to 421 enclose the Death domain; it reads REEVEKLLNG…DLVESLCSES (78 aa).

In terms of assembly, homodimer; disulfide-linked. Heterodimer with SORCS2. The extracellular domains of the heterodimer bind NGF. The cytoplasmic region of the heterodimer binds TRIO. NGF binding mediates dissociation of TRIO from the receptor complex. Interacts with RTN4R. Interacts with TRAF2, TRAF4, TRAF6, PTPN13 and RANBP9. Interacts through TRAF6 with SQSTM1 which bridges NGFR to NTRK1. Interacts with BEX1. Interacts with BEX3. Interacts with KIDINS220 and NTRK1. Can form a ternary complex with NTRK1 and KIDINS220 and this complex is affected by the expression levels of KIDINS220. An increase in KIDINS220 expression leads to a decreased association of NGFR and NTRK1. Interacts with NTRK2; may regulate the ligand specificity of the NTRK2 receptor. Interacts (via death domain) with RAB31. Interacts with LINGO1. Interacts with NRADD. Interacts with MAGED1; the interaction antagonizes the association NGFR:NTRK1. Interacts (via death domain) with ARHGDIA and RIPK2. Interacts with BFAR. In terms of processing, N- and O-glycosylated. O-linked glycans consist of Gal(1-3)GalNAc core elongated by 1 or 2 NeuNAc. Post-translationally, phosphorylated on serine residues.

Its subcellular location is the cell membrane. It localises to the cytoplasm. The protein resides in the perikaryon. The protein localises to the cell projection. It is found in the growth cone. Its subcellular location is the dendritic spine. Functionally, low affinity receptor which can bind to NGF, BDNF, NTF3, and NTF4. Forms a heterodimeric receptor with SORCS2 that binds the precursor forms of NGF, BDNF and NTF3 with high affinity, and has much lower affinity for mature NGF and BDNF. Plays an important role in differentiation and survival of specific neuronal populations during development. Can mediate cell survival as well as cell death of neural cells. Plays a role in the inactivation of RHOA. Plays a role in the regulation of the translocation of GLUT4 to the cell surface in adipocytes and skeletal muscle cells in response to insulin, probably by regulating RAB31 activity, and thereby contributes to the regulation of insulin-dependent glucose uptake. Necessary for the circadian oscillation of the clock genes BMAL1, PER1, PER2 and NR1D1 in the suprachiasmatic nucleus (SCmgetaN) of the brain and in liver and of the genes involved in glucose and lipid metabolism in the liver. Together with BFAR negatively regulates NF-kappa-B and JNK-related signaling pathways. This is Tumor necrosis factor receptor superfamily member 16 (NGFR) from Homo sapiens (Human).